The sequence spans 315 residues: Lipoyl synthase (315 aa).

The [4Fe-4S] cluster site is built by Cys-62, Cys-67, Cys-73, Cys-88, Cys-92, Cys-95, and Ser-302. One can recognise a Radical SAM core domain in the interval 74–291; the sequence is FGKGTATFMI…ETEALRMGFR (218 aa).

The protein belongs to the radical SAM superfamily. Lipoyl synthase family. It depends on [4Fe-4S] cluster as a cofactor.

The protein resides in the cytoplasm. It carries out the reaction [[Fe-S] cluster scaffold protein carrying a second [4Fe-4S](2+) cluster] + N(6)-octanoyl-L-lysyl-[protein] + 2 oxidized [2Fe-2S]-[ferredoxin] + 2 S-adenosyl-L-methionine + 4 H(+) = [[Fe-S] cluster scaffold protein] + N(6)-[(R)-dihydrolipoyl]-L-lysyl-[protein] + 4 Fe(3+) + 2 hydrogen sulfide + 2 5'-deoxyadenosine + 2 L-methionine + 2 reduced [2Fe-2S]-[ferredoxin]. The protein operates within protein modification; protein lipoylation via endogenous pathway; protein N(6)-(lipoyl)lysine from octanoyl-[acyl-carrier-protein]: step 2/2. Its function is as follows. Catalyzes the radical-mediated insertion of two sulfur atoms into the C-6 and C-8 positions of the octanoyl moiety bound to the lipoyl domains of lipoate-dependent enzymes, thereby converting the octanoylated domains into lipoylated derivatives. The sequence is that of Lipoyl synthase from Azoarcus sp. (strain BH72).